We begin with the raw amino-acid sequence, 164 residues long: uncharacterized protein (164 aa).

2 helical membrane-spanning segments follow: residues 11–31 (FYVNGFFSFLFLFLFLFPSLL) and 51–71 (CQQYSSLAIFTASGFWLLVLV).

The protein localises to the membrane. This is an uncharacterized protein from Saccharomyces cerevisiae (strain ATCC 204508 / S288c) (Baker's yeast).